Here is a 1065-residue protein sequence, read N- to C-terminus: Cellulose synthase A catalytic subunit 3 [UDP-forming] (1065 aa).

At 1–260 the chain is on the cytoplasmic side; it reads MESEGETAGK…PSSRINPYRM (260 aa). S3 is subject to Phosphoserine. Zn(2+)-binding residues include C20, C23, C39, C42, C47, C50, C62, and C65. An RING-type; degenerate zinc finger spans residues 20-66; it reads CQICSDNVGKTVDGDRFVACDICSFPVCRPCYEYERKDGNQSCPQCK. 3 positions are modified to phosphoserine: S151, S211, and S216. A helical membrane pass occupies residues 261–281; the sequence is VIMLRLVILCLFLHYRITNPV. The Extracellular portion of the chain corresponds to 282 to 283; sequence PN. The chain crosses the membrane as a helical span at residues 284 to 304; sequence AFALWLVSVICEIWFALSWIL. Over 305 to 842 the chain is Cytoplasmic; that stretch reads DQFPKWFPVN…LERFAYVNTT (538 aa). Residues S343, K349, E350, and D379 each contribute to the UDP-alpha-D-glucose site. D379 is an active-site residue. The stretch at 433-457 forms a coiled coil; it reads VKDRRAMKREYEEFKIRINALVSKA. K520 contributes to the UDP-alpha-D-glucose binding site. The Mn(2+) site is built by K521 and D545. The segment at 643-672 is disordered; the sequence is SKLCGGSRKKNSKAKKESDKKKSGRHTDST. Positions 656 to 670 are enriched in basic and acidic residues; that stretch reads AKKESDKKKSGRHTD. D765 is a catalytic residue. The helical transmembrane segment at 843–863 threads the bilayer; it reads IYPITSIPLLMYCTLPAVCLF. Residues 864-874 are Extracellular-facing; sequence TNQFIIPQISN. Residues 875 to 895 traverse the membrane as a helical segment; sequence IASIWFLSLFLSIFATGILEM. Residues 896–910 are Cytoplasmic-facing; sequence RWSGVGIDEWWRNEQ. Residues 911-931 traverse the membrane as a helical segment; that stretch reads FWVIGGVSAHLFAVFQGILKV. Residues 932 to 961 lie on the Extracellular side of the membrane; it reads LAGIDTNFTVTSKASDEDGDFAELYLFKWT. N-linked (GlcNAc...) asparagine glycosylation occurs at N938. Residues 962-982 traverse the membrane as a helical segment; sequence TLLIPPTTLLIVNLVGVVAGV. The Cytoplasmic segment spans residues 983-993; sequence SYAINSGYQSW. The helical transmembrane segment at 994-1014 threads the bilayer; sequence GPLFGKLFFAFWVIVHLYPFL. Residues 1015-1023 lie on the Extracellular side of the membrane; the sequence is KGLMGRQNR. Residues 1024-1044 traverse the membrane as a helical segment; it reads TPTIVVVWSVLLASIFSLLWV. The Cytoplasmic portion of the chain corresponds to 1045-1065; that stretch reads RIDPFTSRVTGPDILECGINC.

It belongs to the glycosyltransferase 2 family. Plant cellulose synthase subfamily. As to quaternary structure, homodimer. Interacts with CESA1 and CESA6. Interacts with STL1 and STL2, but not with GOT1. Binds to CSI1 and CSI3. Interacts with PAT24/TIP1. Zn(2+) serves as cofactor. The cofactor is Mn(2+). Palmitoylated, in part by PAT24/TIP1. As to expression, expressed in young plants, flowers and roots, and to a lower extent in leaves and stems. Localized in all cells except meristematic cells. Accumulates particularly in root caps, root hairs, epidermal layer, midveins of leaves and anthers. Not present in old tissues.

Its subcellular location is the cell membrane. It is found in the golgi apparatus membrane. The enzyme catalyses [(1-&gt;4)-beta-D-glucosyl](n) + UDP-alpha-D-glucose = [(1-&gt;4)-beta-D-glucosyl](n+1) + UDP + H(+). Its pathway is glycan metabolism; plant cellulose biosynthesis. Functionally, catalytic subunit of cellulose synthase terminal complexes ('rosettes'), required for beta-1,4-glucan microfibril crystallization, a major mechanism of the cell wall formation. Involved in the primary cell wall formation, especially in roots. This is Cellulose synthase A catalytic subunit 3 [UDP-forming] from Arabidopsis thaliana (Mouse-ear cress).